The sequence spans 218 residues: Protein N-lysine methyltransferase METTL21A (218 aa).

S-adenosyl-L-methionine-binding positions include W47, 73 to 75 (GAG), D94, W125, and A143.

It belongs to the methyltransferase superfamily. METTL21 family. In terms of assembly, interacts with heat shock protein 70 family members; at least some of these proteins are methylation substrates.

It is found in the cytoplasm. It carries out the reaction L-lysyl-[protein] + 3 S-adenosyl-L-methionine = N(6),N(6),N(6)-trimethyl-L-lysyl-[protein] + 3 S-adenosyl-L-homocysteine + 3 H(+). In terms of biological role, protein-lysine methyltransferase that selectively trimethylates residues in heat shock protein 70 (HSP70) family members. Contributes to the in vivo trimethylation of Lys residues in HSPA1 and HSPA8. In vitro methylates 'Lys-561' in HSPA1, 'Lys-564' in HSPA2, 'Lys-585' in HSPA5, 'Lys-563' in HSPA6 and 'Lys-561' in HSPA8. In Homo sapiens (Human), this protein is Protein N-lysine methyltransferase METTL21A (METTL21A).